The primary structure comprises 215 residues: Elongation factor Ts (215 aa).

The tract at residues 80–83 (TDFA) is involved in Mg(2+) ion dislocation from EF-Tu.

The protein belongs to the EF-Ts family.

Its subcellular location is the cytoplasm. Functionally, associates with the EF-Tu.GDP complex and induces the exchange of GDP to GTP. It remains bound to the aminoacyl-tRNA.EF-Tu.GTP complex up to the GTP hydrolysis stage on the ribosome. The protein is Elongation factor Ts of Acetivibrio thermocellus (strain ATCC 27405 / DSM 1237 / JCM 9322 / NBRC 103400 / NCIMB 10682 / NRRL B-4536 / VPI 7372) (Clostridium thermocellum).